The chain runs to 112 residues: Nitrogen regulatory protein P-II (112 aa).

Tyrosine 51 carries the O-UMP-tyrosine modification.

It belongs to the P(II) protein family. Homotrimer.

In nitrogen-limiting conditions, when the ratio of Gln to 2-ketoglutarate decreases, P-II is uridylylated to P-II-UMP. P-II-UMP allows the deadenylation of glutamine synthetase (GS), thus activating the enzyme. Conversely, in nitrogen excess P-II is deuridylated and promotes the adenylation of GS. P-II indirectly controls the transcription of the GS gene (glnA). P-II prevents NR-II-catalyzed conversion of NR-I to NR-I-phosphate, the transcriptional activator of glnA. When P-II is uridylylated to P-II-UMP, these events are reversed. The sequence is that of Nitrogen regulatory protein P-II (glnB) from Azospirillum brasilense.